The primary structure comprises 205 residues: Putative epidermin response regulator (205 aa).

The ompR/PhoB-type DNA-binding region spans lysine 103–isoleucine 200.

This sequence to the C-terminus of E.coli phosphate regulon transcriptional regulatory protein PhoB.

The protein is Putative epidermin response regulator (epiQ) of Staphylococcus epidermidis.